The sequence spans 107 residues: MLENKNFKFIENEIKNNKVVLFMKGIKKSPACGFSGTVVAILNKLGVEFRDINVLFDAELREDLKKFSDWPTFPQLYINGELVGGCDIARELYQSGELEKMLKAYTR.

One can recognise a Glutaredoxin domain in the interval 7–107 (FKFIENEIKN…LEKMLKAYTR (101 aa)). Position 24 (Lys24) interacts with glutathione. Residue Cys32 coordinates [2Fe-2S] cluster. Residues Arg61, Phe73, and 86-87 (CD) contribute to the glutathione site.

Belongs to the glutaredoxin family. Monothiol subfamily.

The sequence is that of Probable monothiol glutaredoxin 2 (grxC2) from Rickettsia conorii (strain ATCC VR-613 / Malish 7).